A 408-amino-acid polypeptide reads, in one-letter code: Peptidoglycan muramidase Tse3 (408 aa).

Asparagine 181, aspartate 253, glutamine 254, glutamate 258, glutamate 375, serine 378, arginine 379, aspartate 382, and asparagine 384 together coordinate Ca(2+).

In terms of assembly, forms a heterotetramer with Tsi3 consisting of two Tse3 dimers and two Tsi3 dimers. Formation of the complex inactivates Tse3 enzymatic activity. The cofactor is Ca(2+).

Its subcellular location is the host membrane. It is found in the secreted. The catalysed reaction is Hydrolysis of (1-&gt;4)-beta-linkages between N-acetylmuramic acid and N-acetyl-D-glucosamine residues in a peptidoglycan and between N-acetyl-D-glucosamine residues in chitodextrins.. Its activity is regulated as follows. Enzymatic activity depends on membrane binding. Toxin secreted by the H1 type VI (H1-T6SS) secretion system into the periplasm of recipient cells. Degrades peptidoglycan via muramidase activity thereby helping itself to compete with other bacteria. To protect itself, the bacterium synthesizes immunity protein Tsi3 that specifically interacts with and inactivates cognate toxin. The protein is Peptidoglycan muramidase Tse3 of Pseudomonas aeruginosa (strain ATCC 15692 / DSM 22644 / CIP 104116 / JCM 14847 / LMG 12228 / 1C / PRS 101 / PAO1).